The following is a 342-amino-acid chain: MMNMLSDRKKLILKAVVENYSQKGQPVGSKLLTHLPYLKFASATIRYDMVQLEKEGFLQKNHTSSGRVPSFKGYTYYLNHLLTRDHDVACMFESIDKVIQKKRFCKGQVIKEALSLLNNLTNYTAMAIGSDIFNNSKINKIDFIPLNSTQAVILIITDKGNVQHQNISLDQTKEISIYDLKDVVQVVNDLLTDKFLSEAANIIQSDFFKQTIAKYICFQEQLIALFMEVFSSFASENLYFSGVSKMLEKPELSNPEIIKKFMGLLERKELLKIMLNQDSLSFKFSDGLQLTPLKDCMILSIPFDVNPNEKGRIAVVGPSWMKYPKVIPILEYLAVHLSKLND.

Belongs to the HrcA family.

Functionally, negative regulator of class I heat shock genes (grpE-dnaK-dnaJ and groELS operons). Prevents heat-shock induction of these operons. This is Heat-inducible transcription repressor HrcA from Onion yellows phytoplasma (strain OY-M).